Consider the following 298-residue polypeptide: Estradiol 17-beta-dehydrogenase 11 (298 aa).

Positions 1–21 are cleaved as a signal peptide; that stretch reads MKYLLDLILLLPLLIVFCIES. 40-64 is a binding site for NADP(+); it reads LITGAGHGIGRLTAYEFAKLNTKLV. Substrate is bound at residue S172. The active-site Proton acceptor is the Y185.

This sequence belongs to the short-chain dehydrogenases/reductases (SDR) family. 17-beta-HSD 3 subfamily.

Its subcellular location is the endoplasmic reticulum. The protein resides in the lipid droplet. It catalyses the reaction 17beta-estradiol + NAD(+) = estrone + NADH + H(+). The enzyme catalyses 17beta-estradiol + NADP(+) = estrone + NADPH + H(+). Functionally, can convert androstan-3-alpha,17-beta-diol (3-alpha-diol) to androsterone in vitro, suggesting that it may participate in androgen metabolism during steroidogenesis. May act by metabolizing compounds that stimulate steroid synthesis and/or by generating metabolites that inhibit it. Has no activity toward DHEA (dehydroepiandrosterone), or A-dione (4-androste-3,17-dione), and only a slight activity toward testosterone to A-dione. This is Estradiol 17-beta-dehydrogenase 11 (Hsd17b11) from Rattus norvegicus (Rat).